The primary structure comprises 47 residues: Large ribosomal subunit protein bL33 (47 aa).

It belongs to the bacterial ribosomal protein bL33 family.

The polypeptide is Large ribosomal subunit protein bL33 (Staphylococcus capitis).